The chain runs to 254 residues: Glucosamine-6-phosphate deaminase (254 aa).

The active-site Proton acceptor; for enolization step is Asp63. The active-site For ring-opening step is the Asn129. His131 acts as the Proton acceptor; for ring-opening step in catalysis. The active-site For ring-opening step is the Glu136.

This sequence belongs to the glucosamine/galactosamine-6-phosphate isomerase family. NagB subfamily.

The catalysed reaction is alpha-D-glucosamine 6-phosphate + H2O = beta-D-fructose 6-phosphate + NH4(+). The protein operates within amino-sugar metabolism; N-acetylneuraminate degradation; D-fructose 6-phosphate from N-acetylneuraminate: step 5/5. Its function is as follows. Catalyzes the reversible isomerization-deamination of glucosamine 6-phosphate (GlcN6P) to form fructose 6-phosphate (Fru6P) and ammonium ion. This chain is Glucosamine-6-phosphate deaminase, found in Exiguobacterium sp. (strain ATCC BAA-1283 / AT1b).